We begin with the raw amino-acid sequence, 1694 residues long: Clathrin heavy chain (1694 aa).

The interval methionine 1–tyrosine 478 is globular terminal domain. WD40-like repeat stretches follow at residues serine 23 to lysine 67, threonine 68 to proline 107, leucine 108 to glutamine 149, asparagine 150 to glutamate 195, glycine 196 to alanine 256, serine 257 to glutamate 300, and asparagine 301 to aspartate 329. Residues glutamate 448–aspartate 464 are binding site for the uncoating ATPase, involved in lattice disassembly. The segment at tyrosine 479–asparagine 522 is flexible linker. The heavy chain arm stretch occupies residues alanine 523 to phenylalanine 1694. 7 CHCR repeats span residues lysine 537 to glutamine 681, alanine 687 to tyrosine 829, isoleucine 834 to aspartate 973, leucine 980 to cysteine 1125, phenylalanine 1129 to alanine 1270, isoleucine 1275 to asparagine 1421, and leucine 1424 to phenylalanine 1567. The tract at residues alanine 1214–alanine 1523 is involved in binding clathrin light chain. The trimerization stretch occupies residues glycine 1551–phenylalanine 1694. Positions lysine 1610 to glutamine 1640 form a coiled coil.

This sequence belongs to the clathrin heavy chain family. As to quaternary structure, clathrin coats are formed from molecules containing 3 heavy chains and 3 light chains.

The protein resides in the cytoplasmic vesicle membrane. It is found in the membrane. It localises to the coated pit. Clathrin is the major protein of the polyhedral coat of coated pits and vesicles. The sequence is that of Clathrin heavy chain (chcA) from Dictyostelium discoideum (Social amoeba).